A 273-amino-acid polypeptide reads, in one-letter code: Serine acetyltransferase (273 aa).

Belongs to the transferase hexapeptide repeat family. In terms of assembly, part of the cysteine synthase complex formed at a ratio of 1 copy of this protein and 2 copies of O-acetylserine sulfhydrylase (cysK). The complex reversibly dissociates in the presence of O-acetyl-L-serine in the absence of hydrogen sulfide.

It is found in the cytoplasm. The enzyme catalyses L-serine + acetyl-CoA = O-acetyl-L-serine + CoA. It participates in amino-acid biosynthesis; L-cysteine biosynthesis; L-cysteine from L-serine: step 1/2. Sensitive to feedback inhibition by L-cysteine. The chain is Serine acetyltransferase (cysE) from Salmonella typhimurium (strain LT2 / SGSC1412 / ATCC 700720).